A 392-amino-acid chain; its full sequence is Norsolorinic acid reductase B (392 aa).

D75 contacts NADP(+). The active-site Proton donor is Y80. NADP(+) contacts are provided by residues 184 to 185 (SD), Q210, 239 to 249 (GTLGQGSFQTE), and 311 to 319 (RKLEHIQGN). The disordered stretch occupies residues 242–263 (GQGSFQTEEGRKQREKDNPGRK). Basic and acidic residues predominate over residues 249 to 261 (EEGRKQREKDNPG).

This sequence belongs to the aldo/keto reductase family. Aldo/keto reductase 2 subfamily.

Its pathway is mycotoxin biosynthesis. Norsolorinic acid reductase; part of the fragmented gene cluster that mediates the biosynthesis of dothistromin (DOTH), a polyketide toxin very similar in structure to the aflatoxin precursor, versicolorin B. The first step of the pathway is the conversion of acetate to norsolorinic acid (NOR) and requires the fatty acid synthase subunits hexA and hexB, as well as the polyketide synthase pksA. PksA combines a hexanoyl starter unit and 7 malonyl-CoA extender units to synthesize the precursor NOR. The hexanoyl starter unit is provided to the acyl-carrier protein (ACP) domain by the fungal fatty acid synthase hexA/hexB. The second step is the conversion of NOR to averantin (AVN) and requires the norsolorinic acid ketoreductase nor1, which catalyzes the dehydration of norsolorinic acid to form (1'S)-averantin. The cytochrome P450 monooxygenase avnA then catalyzes the hydroxylation of AVN to 5'hydroxyaverantin (HAVN). The next step is performed by adhA that transforms HAVN to averufin (AVF). Averufin might then be converted to hydroxyversicolorone by cypX and avfA. Hydroxyversicolorone is further converted versiconal hemiacetal acetate (VHA) by moxY. VHA is then the substrate for the versiconal hemiacetal acetate esterase est1 to yield versiconal (VAL). Versicolorin B synthase vbsA then converts VAL to versicolorin B (VERB) by closing the bisfuran ring. Then, the activity of the versicolorin B desaturase verB leads to versicolorin A (VERA). DotB, a predicted chloroperoxidase, may perform epoxidation of the A-ring of VERA. Alternatively, a cytochrome P450, such as cypX or avnA could catalyze this step. It is also possible that another, uncharacterized, cytochrome P450 enzyme is responsible for this step. Opening of the epoxide could potentially be achieved by the epoxide hydrolase epoA. However, epoA seems not to be required for DOTH biosynthesis, but other epoxide hydrolases may have the ability to complement this hydrolysis. Alternatively, opening of the epoxide ring could be achieved non-enzymatically. The next step is the deoxygenation of ring A to yield the 5,8-dihydroxyanthraquinone which is most likely catalyzed by the NADPH dehydrogenase encoded by ver1. The last stages of DOTH biosynthesis are proposed to involve hydroxylation of the bisfuran. OrdB and norB might have oxidative roles here. An alternative possibility is that cytochrome P450 monoogenases such as avnA and cypX might perform these steps in addition to previously proposed steps. This is Norsolorinic acid reductase B from Dothistroma septosporum (strain NZE10 / CBS 128990) (Red band needle blight fungus).